The following is a 386-amino-acid chain: Cytoplasmic 60S subunit biogenesis factor ZNF622 (386 aa).

N-acetylalanine is present on Ala2. 2 U1-type zinc fingers span residues Tyr4–His28 and Thr67–His91. Residues Ala135 to Pro237 are disordered. A compositionally biased stretch (basic and acidic residues) spans Gly165–Pro176. Residues Glu194–Glu235 are compositionally biased toward acidic residues. Residue Ser269 is modified to Phosphoserine.

This sequence belongs to the REI1 family. As to quaternary structure, homo- and heterodimer. Associates with pre-60S ribosomal particles. Interacts with MELK and MYBL2. Interacts with DNAJC21. Phosphorylated by MELK. The phosphorylation may redirect the protein to the nucleus. In terms of processing, ubiquitinated by HECTD1, leading to its degradation.

It is found in the cytoplasm. The protein localises to the nucleus. Functionally, pre-60S-associated cytoplasmic factor involved in the cytoplasmic maturation of the 60S subunit. The polypeptide is Cytoplasmic 60S subunit biogenesis factor ZNF622 (Znf622) (Rattus norvegicus (Rat)).